Reading from the N-terminus, the 312-residue chain is Glycine--tRNA ligase alpha subunit (312 aa).

Belongs to the class-II aminoacyl-tRNA synthetase family. In terms of assembly, tetramer of two alpha and two beta subunits.

It localises to the cytoplasm. The catalysed reaction is tRNA(Gly) + glycine + ATP = glycyl-tRNA(Gly) + AMP + diphosphate. The chain is Glycine--tRNA ligase alpha subunit from Methylobacillus flagellatus (strain ATCC 51484 / DSM 6875 / VKM B-1610 / KT).